A 204-amino-acid polypeptide reads, in one-letter code: High frequency lysogenization protein HflD homolog (204 aa).

This sequence belongs to the HflD family.

It is found in the cytoplasm. Its subcellular location is the cell inner membrane. This is High frequency lysogenization protein HflD homolog from Shewanella amazonensis (strain ATCC BAA-1098 / SB2B).